We begin with the raw amino-acid sequence, 197 residues long: Recombination protein RecR (197 aa).

Residues 57–72 form a C4-type zinc finger; sequence CSVCFGITEDDPCRFC. Positions 79-174 constitute a Toprim domain; sequence GAICVVEEPQ…RVTRLAHGIP (96 aa).

Belongs to the RecR family.

May play a role in DNA repair. It seems to be involved in an RecBC-independent recombinational process of DNA repair. It may act with RecF and RecO. The sequence is that of Recombination protein RecR from Geobacter sulfurreducens (strain ATCC 51573 / DSM 12127 / PCA).